A 147-amino-acid chain; its full sequence is Lysozyme C-1 (147 aa).

The first 18 residues, 1–18 (MKALLTLVFCLLPLAAQG), serve as a signal peptide directing secretion. The 129-residue stretch at 19-147 (KVYSRCELAA…VSKWIRGCRL (129 aa)) folds into the C-type lysozyme domain. Intrachain disulfides connect Cys24-Cys145, Cys48-Cys133, Cys82-Cys98, and Cys94-Cys112. Active-site residues include Glu53 and Asp70.

It belongs to the glycosyl hydrolase 22 family.

Its subcellular location is the secreted. The catalysed reaction is Hydrolysis of (1-&gt;4)-beta-linkages between N-acetylmuramic acid and N-acetyl-D-glucosamine residues in a peptidoglycan and between N-acetyl-D-glucosamine residues in chitodextrins.. Lysozymes have primarily a bacteriolytic function; those in tissues and body fluids are associated with the monocyte-macrophage system and enhance the activity of immunoagents. The polypeptide is Lysozyme C-1 (Anas platyrhynchos (Mallard)).